A 528-amino-acid chain; its full sequence is Protein spinster homolog 1 (528 aa).

The tract at residues 1-38 (MAGSDTAPFLSQADDPDDGPAPGHPGLPGPMGNPKSGE) is disordered. N-acetylalanine is present on Ala-2. 12 helical membrane passes run 60-80 (LIVV…FTVA), 98-118 (GLIQ…FGYL), 126-146 (YLMC…SFIP), 160-180 (VGVG…DLFV), 187-207 (MLSI…IAGS), 218-238 (WALR…FLVV), 278-298 (LGFT…PAFL), 323-343 (LIFG…GVEI), 357-377 (LVCA…LACA), 381-401 (IVAT…NWAI), 421-441 (FQIV…IGLI), and 465-485 (MLCA…AMFI). The residue at position 518 (Ser-518) is a Phosphoserine.

This sequence belongs to the major facilitator superfamily. Spinster (TC 2.A.1.49) family. Interacts with BCL2 and BCL2L1.

It localises to the lysosome membrane. It carries out the reaction a 1-acyl-sn-glycero-3-phosphocholine(out) + H(+)(out) = a 1-acyl-sn-glycero-3-phosphocholine(in) + H(+)(in). The catalysed reaction is 1-hexadecanoyl-sn-glycero-3-phosphocholine(out) + H(+)(out) = 1-hexadecanoyl-sn-glycero-3-phosphocholine(in) + H(+)(in). It catalyses the reaction 1-(9Z-octadecenoyl)-sn-glycero-3-phosphocholine(out) + H(+)(out) = 1-(9Z-octadecenoyl)-sn-glycero-3-phosphocholine(in) + H(+)(in). The enzyme catalyses 1-(5Z,8Z,11Z,14Z-eicosatetraenoyl)-sn-glycero-3-phosphocholine(out) + H(+)(out) = 1-(5Z,8Z,11Z,14Z-eicosatetraenoyl)-sn-glycero-3-phosphocholine(in) + H(+)(in). It carries out the reaction 1-(4Z,7Z,10Z,13Z,16Z,19Z-docosahexaenoyl)-sn-glycero-3-phosphocholine(out) + H(+)(out) = 1-(4Z,7Z,10Z,13Z,16Z,19Z-docosahexaenoyl)-sn-glycero-3-phosphocholine(in) + H(+)(in). The catalysed reaction is a 1-acyl-sn-glycero-3-phosphoethanolamine(out) + H(+)(out) = a 1-acyl-sn-glycero-3-phosphoethanolamine(in) + H(+)(in). It catalyses the reaction 1-(9Z-octadecenoyl)-sn-glycero-3-phosphoethanolamine(out) + H(+)(out) = 1-(9Z-octadecenoyl)-sn-glycero-3-phosphoethanolamine(in) + H(+)(in). The enzyme catalyses 1-acyl-sn-glycero-3-phospho-(1'-sn-glycerol)(out) + H(+)(out) = 1-acyl-sn-glycero-3-phospho-(1'-sn-glycerol)(in) + H(+)(in). It carries out the reaction 1-(9Z-octadecenoyl)-sn-glycero-3-phospho-(1'-sn-glycerol)(out) + H(+)(out) = 1-(9Z-octadecenoyl)-sn-glycero-3-phospho-(1'-sn-glycerol)(in) + H(+)(in). The catalysed reaction is a 1-O-(1Z-alkenyl)-sn-glycero-3-phosphocholine(out) + H(+)(out) = a 1-O-(1Z-alkenyl)-sn-glycero-3-phosphocholine(in) + H(+)(in). It catalyses the reaction 1-(1Z-hexadecenyl)-sn-glycero-3-phosphocholine(out) + H(+)(out) = 1-(1Z-hexadecenyl)-sn-glycero-3-phosphocholine(in) + H(+)(in). The enzyme catalyses a 1-O-(1Z-alkenyl)-sn-glycero-3-phosphoethanolamine(out) + H(+)(out) = a 1-O-(1Z-alkenyl)-sn-glycero-3-phosphoethanolamine(in) + H(+)(in). It carries out the reaction 1-O-(1Z-hexadecenyl)-sn-glycero-3-phosphoethanolamine(out) + H(+)(out) = 1-O-(1Z-hexadecenyl)-sn-glycero-3-phosphoethanolamine(in) + H(+)(in). In terms of biological role, plays a critical role in the phospholipid salvage pathway from lysosomes to the cytosol. Mediates the rate-limiting, proton-dependent, lysosomal efflux of lysophospholipids, which can then be reacylated by acyltransferases in the endoplasmic reticulum to form phospholipids. Selective for zwitterionic headgroups such as lysophosphatidylcholine (LPC) and lysophosphatidylethanolamine (LPE), can also transport lysophosphatidylglycerol (LPG), but not other anionic lysophospholipids, sphingosine, nor sphingomyelin. Transports lysophospholipids with saturated, monounsaturated, and polyunsaturated fatty acids, such as 1-hexadecanoyl-sn-glycero-3-phosphocholine, 1-(9Z-octadecenoyl)-sn-glycero-3-phosphocholine and 1-(4Z,7Z,10Z,13Z,16Z,19Z-docosahexaenoyl)-sn-glycero-3-phosphocholine, respectively. Can also transport lysoplasmalogen (LPC with a fatty alcohol) such as 1-(1Z-hexadecenyl)-sn-glycero-3-phosphocholine. Essential player in lysosomal homeostasis. Crucial for cell survival under conditions of nutrient limitation. May be involved in necrotic or autophagic cell death. The chain is Protein spinster homolog 1 (Spns1) from Rattus norvegicus (Rat).